Here is a 390-residue protein sequence, read N- to C-terminus: Aspergillopepsin-1 (390 aa).

A signal peptide spans 1–19; that stretch reads MVNTSLLAALTAYAVAVSA. The propeptide at 20-67 is activation peptide; the sequence is APTAPQVKGFSVNQVAVPKGVYRHPAAQLAKAYGKYHATVPTQVAAAA. T70 carries an O-linked (Man...) threonine glycan. The Peptidase A1 domain occupies 84–387; that stretch reads YITQVTVGDD…DASGPRLGFA (304 aa). Catalysis depends on residues D100 and D281.

Belongs to the peptidase A1 family.

The protein resides in the secreted. The catalysed reaction is Hydrolysis of proteins with broad specificity. Generally favors hydrophobic residues in P1 and P1', but also accepts Lys in P1, which leads to activation of trypsinogen. Does not clot milk.. With respect to regulation, inhibited by the microbial peptide pepstatin. Its function is as follows. Secreted aspartic endopeptidase that allows assimilation of proteinaceous substrates. The scissile peptide bond is attacked by a nucleophilic water molecule activated by two aspartic residues in the active site. Shows a broad primary substrate specificity. Favors hydrophobic residues at the P1 and P1' positions, but also accepts a lysine residue in the P1 position, leading to the activation of trypsinogen and chymotrypsinogen A. This Aspergillus oryzae (Yellow koji mold) protein is Aspergillopepsin-1 (pepA).